The following is a 346-amino-acid chain: ATP-dependent 6-phosphofructokinase (346 aa).

ATP contacts are provided by residues G13, 76–77 (RL), and 106–109 (GEGT). E107 lines the Mg(2+) pocket. Residues 129-131 (TID), R166, 173-175 (MGR), E226, R270, and 276-279 (HIQR) each bind substrate. D131 (proton acceptor) is an active-site residue.

It belongs to the phosphofructokinase type A (PFKA) family. Mixed-substrate PFK group III subfamily. Homodimer or homotetramer. Requires Mg(2+) as cofactor.

It localises to the cytoplasm. The enzyme catalyses beta-D-fructose 6-phosphate + ATP = beta-D-fructose 1,6-bisphosphate + ADP + H(+). The protein operates within carbohydrate degradation; glycolysis; D-glyceraldehyde 3-phosphate and glycerone phosphate from D-glucose: step 3/4. Functionally, catalyzes the phosphorylation of D-fructose 6-phosphate to fructose 1,6-bisphosphate by ATP, the first committing step of glycolysis. This chain is ATP-dependent 6-phosphofructokinase, found in Corynebacterium efficiens (strain DSM 44549 / YS-314 / AJ 12310 / JCM 11189 / NBRC 100395).